A 295-amino-acid chain; its full sequence is uncharacterized protein (295 aa).

A signal peptide spans 1–19 (MFRKFLFIPLLIVTSLVKA). The disordered stretch occupies residues 274–295 (KRNNPPLKNNNAKSKNSYETHK). The segment covering 276 to 288 (NNPPLKNNNAKSK) has biased composition (low complexity).

This is an uncharacterized protein from Rickettsia typhi (strain ATCC VR-144 / Wilmington).